A 244-amino-acid polypeptide reads, in one-letter code: Probable transcriptional regulatory protein Dgeo_2194 (244 aa).

The disordered stretch occupies residues 1–21 (MAGHSKWAQIKRKKGANDKKR).

This sequence belongs to the TACO1 family.

The protein localises to the cytoplasm. The chain is Probable transcriptional regulatory protein Dgeo_2194 from Deinococcus geothermalis (strain DSM 11300 / CIP 105573 / AG-3a).